A 295-amino-acid chain; its full sequence is Ethanolamine ammonia-lyase small subunit (295 aa).

Adenosylcob(III)alamin is bound by residues Val-207, Glu-228, and Cys-258.

It belongs to the EutC family. The basic unit is a heterodimer which dimerizes to form tetramers. The heterotetramers trimerize; 6 large subunits form a core ring with 6 small subunits projecting outwards. The cofactor is adenosylcob(III)alamin.

The protein localises to the bacterial microcompartment. It catalyses the reaction ethanolamine = acetaldehyde + NH4(+). It functions in the pathway amine and polyamine degradation; ethanolamine degradation. In terms of biological role, catalyzes the deamination of various vicinal amino-alcohols to oxo compounds. Allows this organism to utilize ethanolamine as the sole source of nitrogen and carbon in the presence of external vitamin B12. This is Ethanolamine ammonia-lyase small subunit from Escherichia coli (strain SMS-3-5 / SECEC).